The primary structure comprises 65 residues: Large ribosomal subunit protein bL35 (65 aa).

3 stretches are compositionally biased toward basic residues: residues 1-18 (MPKM…KRTA), 31-44 (HRFH…RRQL), and 55-65 (VKRYKKMIPAK). The disordered stretch occupies residues 1-65 (MPKMKTKSAA…KRYKKMIPAK (65 aa)).

This sequence belongs to the bacterial ribosomal protein bL35 family.

In Limosilactobacillus fermentum (strain NBRC 3956 / LMG 18251) (Lactobacillus fermentum), this protein is Large ribosomal subunit protein bL35.